A 402-amino-acid polypeptide reads, in one-letter code: B3 domain-containing protein LFL1 (402 aa).

The disordered stretch occupies residues 1 to 174 (MRGEERWQEQ…AAPRPSSHHT (174 aa)). Positions 74–87 (ARPPTLAASAAAAS) are enriched in low complexity. Residues 88–102 (SPPPPPPPPIPPLPP) are compositionally biased toward pro residues. Low complexity-rich tracts occupy residues 103 to 139 (STST…AAVS) and 156 to 169 (PRPA…APRP). Positions 181–284 (LQKELRYSDV…RFVIGAKKAG (104 aa)) form a DNA-binding region, TF-B3. Residues 381-402 (LHVTDDKSGHSLIPNPKSGPHM) form a disordered region.

In terms of tissue distribution, expressed in anthers, pollen grains and young developing embryos.

It localises to the nucleus. Transcription repressor involved in flowering time regulation. Represses the flowering activator EHD1 by binding specifically to the DNA sequence 5'-CATGCATG-3 of its promoter. The protein is B3 domain-containing protein LFL1 (LFL1) of Oryza sativa subsp. japonica (Rice).